The following is a 440-amino-acid chain: Xylose isomerase (440 aa).

Residues histidine 101 and aspartate 104 contribute to the active site. Mg(2+)-binding residues include glutamate 232, glutamate 268, histidine 271, aspartate 296, aspartate 307, aspartate 309, and aspartate 339.

It belongs to the xylose isomerase family. In terms of assembly, homotetramer. Mg(2+) serves as cofactor.

It localises to the cytoplasm. It catalyses the reaction alpha-D-xylose = alpha-D-xylulofuranose. The chain is Xylose isomerase from Salmonella typhi.